Consider the following 310-residue polypeptide: ADP-L-glycero-D-manno-heptose-6-epimerase (310 aa).

NADP(+) is bound by residues phenylalanine 10–isoleucine 11, aspartate 31–asparagine 32, lysine 38, lysine 53, glutamate 75–serine 79, and asparagine 92. Tyrosine 140 (proton acceptor) is an active-site residue. Lysine 144 provides a ligand contact to NADP(+). Asparagine 169 provides a ligand contact to substrate. 2 residues coordinate NADP(+): valine 170 and lysine 178. Lysine 178 (proton acceptor) is an active-site residue. Residues serine 180, histidine 187, phenylalanine 201–serine 204, arginine 209, and tyrosine 272 contribute to the substrate site.

Belongs to the NAD(P)-dependent epimerase/dehydratase family. HldD subfamily. Homopentamer. NADP(+) is required as a cofactor.

It catalyses the reaction ADP-D-glycero-beta-D-manno-heptose = ADP-L-glycero-beta-D-manno-heptose. The protein operates within nucleotide-sugar biosynthesis; ADP-L-glycero-beta-D-manno-heptose biosynthesis; ADP-L-glycero-beta-D-manno-heptose from D-glycero-beta-D-manno-heptose 7-phosphate: step 4/4. Functionally, catalyzes the interconversion between ADP-D-glycero-beta-D-manno-heptose and ADP-L-glycero-beta-D-manno-heptose via an epimerization at carbon 6 of the heptose. The protein is ADP-L-glycero-D-manno-heptose-6-epimerase of Salmonella arizonae (strain ATCC BAA-731 / CDC346-86 / RSK2980).